The primary structure comprises 339 residues: tRNA-specific 2-thiouridylase MnmA (339 aa).

ATP-binding positions include 6–13 (AMSGGVDS) and methionine 32. Cysteine 92 (nucleophile) is an active-site residue. A disulfide bridge connects residues cysteine 92 and cysteine 186. Glycine 116 is an ATP binding site. Residues 134–136 (KDQ) are interaction with tRNA. Cysteine 186 functions as the Cysteine persulfide intermediate in the catalytic mechanism. The interaction with tRNA stretch occupies residues 288-289 (RY).

This sequence belongs to the MnmA/TRMU family.

The protein resides in the cytoplasm. It carries out the reaction S-sulfanyl-L-cysteinyl-[protein] + uridine(34) in tRNA + AH2 + ATP = 2-thiouridine(34) in tRNA + L-cysteinyl-[protein] + A + AMP + diphosphate + H(+). Functionally, catalyzes the 2-thiolation of uridine at the wobble position (U34) of tRNA, leading to the formation of s(2)U34. The sequence is that of tRNA-specific 2-thiouridylase MnmA from Campylobacter curvus (strain 525.92).